A 217-amino-acid chain; its full sequence is Adapter protein MecA (217 aa).

The protein belongs to the MecA family. Homodimer.

Its function is as follows. Enables the recognition and targeting of unfolded and aggregated proteins to the ClpC protease or to other proteins involved in proteolysis. This chain is Adapter protein MecA, found in Listeria welshimeri serovar 6b (strain ATCC 35897 / DSM 20650 / CCUG 15529 / CIP 8149 / NCTC 11857 / SLCC 5334 / V8).